Here is a 270-residue protein sequence, read N- to C-terminus: Acyl-[acyl-carrier-protein]--UDP-N-acetylglucosamine O-acyltransferase (270 aa).

It belongs to the transferase hexapeptide repeat family. LpxA subfamily. Homotrimer.

Its subcellular location is the cytoplasm. The enzyme catalyses a (3R)-hydroxyacyl-[ACP] + UDP-N-acetyl-alpha-D-glucosamine = a UDP-3-O-[(3R)-3-hydroxyacyl]-N-acetyl-alpha-D-glucosamine + holo-[ACP]. Its pathway is glycolipid biosynthesis; lipid IV(A) biosynthesis; lipid IV(A) from (3R)-3-hydroxytetradecanoyl-[acyl-carrier-protein] and UDP-N-acetyl-alpha-D-glucosamine: step 1/6. Functionally, involved in the biosynthesis of lipid A, a phosphorylated glycolipid that anchors the lipopolysaccharide to the outer membrane of the cell. This chain is Acyl-[acyl-carrier-protein]--UDP-N-acetylglucosamine O-acyltransferase, found in Helicobacter pylori (strain HPAG1).